Reading from the N-terminus, the 110-residue chain is Early E3B 12.7 kDa protein (110 aa).

The N-terminal stretch at 1–16 is a signal peptide; that stretch reads MKTALVLFFMLIPVWA. The helical transmembrane segment at 37–57 threads the bilayer; sequence YIGWVYGIMSGLVFVSSVVSL.

This sequence belongs to the adenoviridae E3_14 family. Post-translationally, phosphorylated on serine; O-glycosylated, but not N-glycosylated.

The protein resides in the host membrane. Down-regulates the EGF receptor and prevents cytolysis by TNF. This is Early E3B 12.7 kDa protein from Homo sapiens (Human).